We begin with the raw amino-acid sequence, 550 residues long: Carnitine transporter (550 aa).

Transmembrane regions (helical) follow at residues 15–35 (FLAV…AIYS), 53–73 (FTTP…GLAF), 92–112 (SWIF…WGFL), 137–157 (VAYS…LASI), 196–216 (MFLL…AVTF), 230–250 (FMTK…SSYV), 263–283 (VCLG…TQFI), 317–337 (WTVF…LFVT), 347–367 (EVIF…FGVF), 401–421 (LLPA…VFLA), 451–471 (LFWC…KAPL), and 477–497 (ATIV…YGLV).

Belongs to the BCCT transporter (TC 2.A.15) family.

It localises to the cell inner membrane. With respect to regulation, inhibited by the protonophore 3,3',4',5-tetrachlorosalicylanilide (TCS). Not activated by osmolarity. Its function is as follows. Catalyzes the energy-dependent uptake of carnitine and is essential for growth on carnitine. Can also mediate the uptake of choline. Is probably a proton:substrate symporter. The sequence is that of Carnitine transporter from Acinetobacter baumannii (strain ATCC 19606 / DSM 30007 / JCM 6841 / CCUG 19606 / CIP 70.34 / NBRC 109757 / NCIMB 12457 / NCTC 12156 / 81).